The following is a 266-amino-acid chain: Killer cell lectin-like receptor 5 (266 aa).

At 1-44 the chain is on the cytoplasmic side; the sequence is MSEPEVTYSTVRLHKSSGLQRLVSHEEIQGPGEAGYRKCSVPWQ. The chain crosses the membrane as a helical; Signal-anchor for type II membrane protein span at residues 45 to 66; the sequence is LTVRSLGIFCFLLLVTVAVLAV. Residues 67 to 266 lie on the Extracellular side of the membrane; it reads KIFQYSQHKQ…CGKKLDHFPG (200 aa). Residues Asn87 and Asn104 are each glycosylated (N-linked (GlcNAc...) asparagine). Residues 143-261 form the C-type lectin domain; that stretch reads GVKHWFCYGT…SYFCICGKKL (119 aa). 4 disulfide bridges follow: Cys149–Cys154, Cys167–Cys255, Cys171–Cys257, and Cys236–Cys249. N-linked (GlcNAc...) asparagine glycosylation occurs at Asn250.

Homodimer; disulfide-linked. In terms of tissue distribution, mostly expressed in NK cells, but also observed on NK T and memory T-cells.

Its subcellular location is the membrane. Its function is as follows. Receptor on natural killer (NK) cells for class I MHC. The chain is Killer cell lectin-like receptor 5 (Klra5) from Mus musculus (Mouse).